A 716-amino-acid chain; its full sequence is Segment polarity protein dishevelled homolog DVL-3 (716 aa).

The DIX domain maps to 1–82 (MGETKIIYHL…RVVSWLVSAE (82 aa)). Arg27 bears the Omega-N-methylarginine mark. Phosphoserine is present on residues Ser48 and Ser125. A disordered region spans residues 85–235 (HPEPAPFCAD…VSRIERSSSF (151 aa)). A compositionally biased stretch (basic and acidic residues) spans 142-156 (QRERPRRRDGPEHAA). The span at 175 to 190 (SSSTLMSSELETTSFF) shows a compositional bias: low complexity. Ser192 carries the phosphoserine modification. Positions 199-212 (SRFSSSTEQSSASR) are enriched in low complexity. The residue at position 212 (Arg212) is an Omega-N-methylarginine. Basic residues predominate over residues 213–226 (LMRRHKRRRRKQKV). The 73-residue stretch at 249 to 321 (TVTLNMEKYN…NDDAVRVLRE (73 aa)) folds into the PDZ domain. Arg271 carries the asymmetric dimethylarginine; by PRMT1; alternate modification. Residues Arg271 and Arg342 each carry the symmetric dimethylarginine; by PRMT7; alternate modification. Arg342 bears the Omega-N-methylarginine; alternate mark. Thr346 carries the phosphothreonine modification. The 75-residue stretch at 422–496 (PESGLEVRDR…SEQCYYIFGD (75 aa)) folds into the DEP domain. The interval 546–691 (PYNPHPGFPE…PPGRDLASVP (146 aa)) is disordered. Over residues 565–581 (ASSQHSEGSRSSGSNRS) the composition is skewed to low complexity. 2 stretches are compositionally biased toward basic and acidic residues: residues 582–595 (GSDR…KAGD) and 604–622 (ESDH…RAPS). A Symmetric dimethylarginine; by PRMT7 modification is found at Arg614. Pro residues-rich tracts occupy residues 653 to 663 (YGPPGVPPLYG) and 670 to 682 (TPPP…PGAP). Ser697 carries the phosphoserine modification. Arg698 is subject to Omega-N-methylarginine; alternate. Position 698 is a dimethylated arginine; alternate (Arg698). Ser700 is subject to Phosphoserine.

Belongs to the DSH family. In terms of assembly, interacts (via the PDZ domain) with the C-terminal regions of VANGL1 and VANGL2. Interacts (via the region containing both the PDZ and DEP domains) with LRRFIP2; the DIX domain may inhibit this interaction. Interacts with CYLD. Interacts with CEP164 and DAB2. Interacts with DCDC2. Interacts with FOXK1 and FOXK2. Interacts with DAAM2. In terms of processing, ubiquitinated. Deubiquitinated by CYLD, which acts on 'Lys-63'-linked ubiquitin chains. Post-translationally, phosphorylated by CSNK1D. Arginine methylation may function as a switch in regulation of function in Wnt signaling. Ubiquitous.

It localises to the cytoplasm. Its function is as follows. Involved in the signal transduction pathway mediated by multiple Wnt genes. This is Segment polarity protein dishevelled homolog DVL-3 (Dvl3) from Mus musculus (Mouse).